The sequence spans 468 residues: Cysteine--tRNA ligase (468 aa).

Residue cysteine 33 participates in Zn(2+) binding. Positions 35 to 45 (ATVQGLPHIGH) match the 'HIGH' region motif. Zn(2+) contacts are provided by cysteine 211, histidine 236, and glutamate 240. The 'KMSKS' region signature appears at 267–271 (KMSKS). Lysine 270 provides a ligand contact to ATP.

The protein belongs to the class-I aminoacyl-tRNA synthetase family. In terms of assembly, monomer. The cofactor is Zn(2+).

The protein localises to the cytoplasm. It carries out the reaction tRNA(Cys) + L-cysteine + ATP = L-cysteinyl-tRNA(Cys) + AMP + diphosphate. In Mycobacterium marinum (strain ATCC BAA-535 / M), this protein is Cysteine--tRNA ligase.